Here is a 555-residue protein sequence, read N- to C-terminus: Membrane protein insertase YidC (555 aa).

The helical transmembrane segment at Ile7–Gln24 threads the bilayer. Composition is skewed to low complexity over residues Gln40 to Ala54 and Ala64 to Gly81. The segment at Gln40–Gly81 is disordered. 5 consecutive transmembrane segments (helical) span residues Leu334–Leu354, Phe360–Phe380, Leu430–Leu450, Leu468–Gln488, and Val503–Val523.

It belongs to the OXA1/ALB3/YidC family. Type 1 subfamily. In terms of assembly, interacts with the Sec translocase complex via SecD. Specifically interacts with transmembrane segments of nascent integral membrane proteins during membrane integration.

It localises to the cell inner membrane. Functionally, required for the insertion and/or proper folding and/or complex formation of integral membrane proteins into the membrane. Involved in integration of membrane proteins that insert both dependently and independently of the Sec translocase complex, as well as at least some lipoproteins. Aids folding of multispanning membrane proteins. In Cupriavidus metallidurans (strain ATCC 43123 / DSM 2839 / NBRC 102507 / CH34) (Ralstonia metallidurans), this protein is Membrane protein insertase YidC.